The chain runs to 156 residues: Extracellular giant hemoglobin major globin subunit A1 (156 aa).

The N-terminal stretch at 1-16 is a signal peptide; that stretch reads MKVLIIFACLVVMASA. A Globin domain is found at 17-156; that stretch reads VCNRLEQILV…YERIASGISG (140 aa). A disulfide bridge links Cys18 with Cys146. A hydrogen sulfide-binding site is contributed by Cys79. His110 provides a ligand contact to heme b.

The protein belongs to the globin family. As to quaternary structure, the 400 kDa hemoglobin consists of a spherical 24-mer arranged as a double layer of dome-shaped dodecamers. Each dodecamer is composed of the 3-fold trimer of the tetramer A1-A2-B1-B2 having one intra-tetramer (A1-B2) disulfide bond and one inter-tetramer (B1-B2) disulfide bond per tetramer.

It is found in the secreted. In terms of biological role, the extracellular giant hemoglobin is able to bind and transport oxygen and hydrosulfide simultaneously and reversibly at two different sites. This is Extracellular giant hemoglobin major globin subunit A1 (ghbA1) from Oligobrachia mashikoi (Beard worm).